The following is a 509-amino-acid chain: Glucose-1-phosphate adenylyltransferase large subunit 4, chloroplastic/amyloplastic (509 aa).

Residues 1–36 (MATCSWAATTAAAAPPRPPARCRSRVAALRRTAAAS) constitute a chloroplast transit peptide.

It belongs to the bacterial/plant glucose-1-phosphate adenylyltransferase family. As to quaternary structure, heterotetramer composed of two small and two large subunits. Expressed in leaves and stems.

Its subcellular location is the plastid. The protein localises to the chloroplast. The catalysed reaction is alpha-D-glucose 1-phosphate + ATP + H(+) = ADP-alpha-D-glucose + diphosphate. Its pathway is glycan biosynthesis; starch biosynthesis. Activated by 3'phosphoglycerate, inhibited by orthophosphate. Allosteric regulation. Involved in synthesis of starch. Catalyzes the synthesis of ADP-glucose, a molecule that serves as an activated glycosyl donor for alpha-1,4-glucan synthesis. Essential for starch synthesis in leaf chloroplasts. The sequence is that of Glucose-1-phosphate adenylyltransferase large subunit 4, chloroplastic/amyloplastic from Oryza sativa subsp. japonica (Rice).